The sequence spans 362 residues: Phosphoserine aminotransferase (362 aa).

Positions 9 and 42 each coordinate L-glutamate. Pyridoxal 5'-phosphate-binding positions include 76 to 77 (GR), tryptophan 102, threonine 153, aspartate 174, and glutamine 197. Lysine 198 bears the N6-(pyridoxal phosphate)lysine mark. Residue 239–240 (NT) participates in pyridoxal 5'-phosphate binding.

It belongs to the class-V pyridoxal-phosphate-dependent aminotransferase family. SerC subfamily. As to quaternary structure, homodimer. The cofactor is pyridoxal 5'-phosphate.

It localises to the cytoplasm. The catalysed reaction is O-phospho-L-serine + 2-oxoglutarate = 3-phosphooxypyruvate + L-glutamate. The enzyme catalyses 4-(phosphooxy)-L-threonine + 2-oxoglutarate = (R)-3-hydroxy-2-oxo-4-phosphooxybutanoate + L-glutamate. Its pathway is amino-acid biosynthesis; L-serine biosynthesis; L-serine from 3-phospho-D-glycerate: step 2/3. It functions in the pathway cofactor biosynthesis; pyridoxine 5'-phosphate biosynthesis; pyridoxine 5'-phosphate from D-erythrose 4-phosphate: step 3/5. Functionally, catalyzes the reversible conversion of 3-phosphohydroxypyruvate to phosphoserine and of 3-hydroxy-2-oxo-4-phosphonooxybutanoate to phosphohydroxythreonine. The chain is Phosphoserine aminotransferase from Salmonella agona (strain SL483).